Reading from the N-terminus, the 126-residue chain is Small ribosomal subunit protein uS12 (126 aa).

Residues Met-1 to Gln-29 are disordered. Asp-89 is modified (3-methylthioaspartic acid).

It belongs to the universal ribosomal protein uS12 family. In terms of assembly, part of the 30S ribosomal subunit. Contacts proteins S8 and S17. May interact with IF1 in the 30S initiation complex.

Functionally, with S4 and S5 plays an important role in translational accuracy. In terms of biological role, interacts with and stabilizes bases of the 16S rRNA that are involved in tRNA selection in the A site and with the mRNA backbone. Located at the interface of the 30S and 50S subunits, it traverses the body of the 30S subunit contacting proteins on the other side and probably holding the rRNA structure together. The combined cluster of proteins S8, S12 and S17 appears to hold together the shoulder and platform of the 30S subunit. The polypeptide is Small ribosomal subunit protein uS12 (Protochlamydia amoebophila (strain UWE25)).